A 524-amino-acid chain; its full sequence is Light-independent protochlorophyllide reductase subunit B (524 aa).

Asp-36 serves as a coordination point for [4Fe-4S] cluster. Asp-290 serves as the catalytic Proton donor. 425–426 (GL) contributes to the substrate binding site.

Belongs to the ChlB/BchB/BchZ family. In terms of assembly, protochlorophyllide reductase is composed of three subunits; ChlL, ChlN and ChlB. Forms a heterotetramer of two ChlB and two ChlN subunits. It depends on [4Fe-4S] cluster as a cofactor.

It catalyses the reaction chlorophyllide a + oxidized 2[4Fe-4S]-[ferredoxin] + 2 ADP + 2 phosphate = protochlorophyllide a + reduced 2[4Fe-4S]-[ferredoxin] + 2 ATP + 2 H2O. It functions in the pathway porphyrin-containing compound metabolism; chlorophyll biosynthesis (light-independent). Functionally, component of the dark-operative protochlorophyllide reductase (DPOR) that uses Mg-ATP and reduced ferredoxin to reduce ring D of protochlorophyllide (Pchlide) to form chlorophyllide a (Chlide). This reaction is light-independent. The NB-protein (ChlN-ChlB) is the catalytic component of the complex. The protein is Light-independent protochlorophyllide reductase subunit B of Synechococcus sp. (strain CC9605).